The chain runs to 174 residues: ATP synthase subunit delta (174 aa).

Belongs to the ATPase delta chain family. As to quaternary structure, F-type ATPases have 2 components, F(1) - the catalytic core - and F(0) - the membrane proton channel. F(1) has five subunits: alpha(3), beta(3), gamma(1), delta(1), epsilon(1). F(0) has three main subunits: a(1), b(2) and c(10-14). The alpha and beta chains form an alternating ring which encloses part of the gamma chain. F(1) is attached to F(0) by a central stalk formed by the gamma and epsilon chains, while a peripheral stalk is formed by the delta and b chains.

It localises to the cell inner membrane. Functionally, f(1)F(0) ATP synthase produces ATP from ADP in the presence of a proton or sodium gradient. F-type ATPases consist of two structural domains, F(1) containing the extramembraneous catalytic core and F(0) containing the membrane proton channel, linked together by a central stalk and a peripheral stalk. During catalysis, ATP synthesis in the catalytic domain of F(1) is coupled via a rotary mechanism of the central stalk subunits to proton translocation. Its function is as follows. This protein is part of the stalk that links CF(0) to CF(1). It either transmits conformational changes from CF(0) to CF(1) or is implicated in proton conduction. The protein is ATP synthase subunit delta of Fusobacterium nucleatum subsp. nucleatum (strain ATCC 25586 / DSM 15643 / BCRC 10681 / CIP 101130 / JCM 8532 / KCTC 2640 / LMG 13131 / VPI 4355).